The sequence spans 36 residues: Alpha-amylase inhibitor AI-3688 (36 aa).

A disulfide bond links Cys-9 and Cys-25.

Inhibits mammalian alpha-amylases specifically but has no action on plant and microbial alpha-amylases. The protein is Alpha-amylase inhibitor AI-3688 of Kitasatospora aureofaciens (Streptomyces aureofaciens).